Reading from the N-terminus, the 121-residue chain is T cell receptor alpha variable 23/delta variable 6 (121 aa).

Residues 1 to 21 (MDKILGASFLVLWLQLCWVSG) form the signal peptide. The 92-residue stretch at 30-121 (QQVKQSPQSL…DSATYFCAAS (92 aa)) folds into the Ig-like domain. A disulfide bond links Cys51 and Cys118. An N-linked (GlcNAc...) asparagine glycan is attached at Asn95.

As to quaternary structure, alpha-beta TR is a heterodimer composed of an alpha and beta chain; disulfide-linked. The alpha-beta TR is associated with the transmembrane signaling CD3 coreceptor proteins to form the TR-CD3 (TcR or TCR). The assembly of alpha-beta TR heterodimers with CD3 occurs in the endoplasmic reticulum where a single alpha-beta TR heterodimer associates with one CD3D-CD3E heterodimer, one CD3G-CD3E heterodimer and one CD247 homodimer forming a stable octameric structure. CD3D-CD3E and CD3G-CD3E heterodimers preferentially associate with TR alpha and TR beta chains, respectively. The association of the CD247 homodimer is the last step of TcR assembly in the endoplasmic reticulum and is required for transport to the cell surface.

It localises to the cell membrane. Its function is as follows. V region of the variable domain of T cell receptor (TR) alpha chain that participates in the antigen recognition. Alpha-beta T cell receptors are antigen specific receptors which are essential to the immune response and are present on the cell surface of T lymphocytes. Recognize peptide-major histocompatibility (MH) (pMH) complexes that are displayed by antigen presenting cells (APC), a prerequisite for efficient T cell adaptive immunity against pathogens. Binding of alpha-beta TR to pMH complex initiates TR-CD3 clustering on the cell surface and intracellular activation of LCK that phosphorylates the ITAM motifs of CD3G, CD3D, CD3E and CD247 enabling the recruitment of ZAP70. In turn ZAP70 phosphorylates LAT, which recruits numerous signaling molecules to form the LAT signalosome. The LAT signalosome propagates signal branching to three major signaling pathways, the calcium, the mitogen-activated protein kinase (MAPK) kinase and the nuclear factor NF-kappa-B (NF-kB) pathways, leading to the mobilization of transcription factors that are critical for gene expression and essential for T cell growth and differentiation. The T cell repertoire is generated in the thymus, by V-(D)-J rearrangement. This repertoire is then shaped by intrathymic selection events to generate a peripheral T cell pool of self-MH restricted, non-autoaggressive T cells. Post-thymic interaction of alpha-beta TR with the pMH complexes shapes TR structural and functional avidity. The polypeptide is T cell receptor alpha variable 23/delta variable 6 (Homo sapiens (Human)).